The following is a 229-amino-acid chain: MKLSFHGQSTIYLEGNNKKVIVDPFISNNPKCDLNIETVQVDYIVLTHGHFDHFGDVVELAKKTEATVIGSAEMADYLSSYHGVENVHGMNIGGKANFDFGSVKFVQAFHSSSFTHENGIPVYLGMPMGIVFEVEGKTIYHTGDTGLFSDMSLIAKRHPVDVCFVPIGDNFTMGIDDASYAINEFIKPKISVPIHYDTFPLIEQDPQQFKDAVNVGDVQILKPGESVQF.

Belongs to the UPF0173 family.

The sequence is that of UPF0173 metal-dependent hydrolase SAR1785 from Staphylococcus aureus (strain MRSA252).